The primary structure comprises 591 residues: Aspartate--tRNA(Asp/Asn) ligase (591 aa).

L-aspartate is bound at residue glutamate 174. Residues glutamine 198–lysine 201 are aspartate. Arginine 220 contacts L-aspartate. ATP-binding positions include arginine 220 to glutamate 222 and glutamine 229. Histidine 450 contacts L-aspartate. Glutamate 483 is an ATP binding site. L-aspartate is bound at residue arginine 490. Glycine 535–arginine 538 provides a ligand contact to ATP.

It belongs to the class-II aminoacyl-tRNA synthetase family. Type 1 subfamily. As to quaternary structure, homodimer.

It localises to the cytoplasm. The catalysed reaction is tRNA(Asx) + L-aspartate + ATP = L-aspartyl-tRNA(Asx) + AMP + diphosphate. In terms of biological role, aspartyl-tRNA synthetase with relaxed tRNA specificity since it is able to aspartylate not only its cognate tRNA(Asp) but also tRNA(Asn). Reaction proceeds in two steps: L-aspartate is first activated by ATP to form Asp-AMP and then transferred to the acceptor end of tRNA(Asp/Asn). In Pseudomonas putida (strain W619), this protein is Aspartate--tRNA(Asp/Asn) ligase.